The following is a 101-amino-acid chain: UPF0235 protein MmarC7_0309 (101 aa).

This sequence belongs to the UPF0235 family.

The sequence is that of UPF0235 protein MmarC7_0309 from Methanococcus maripaludis (strain C7 / ATCC BAA-1331).